The primary structure comprises 1736 residues: Hybrid signal transduction histidine kinase I (1736 aa).

Positions 143–161 (HNINNNQNNQNSVNINSSN) are enriched in low complexity. The disordered stretch occupies residues 143 to 171 (HNINNNQNNQNSVNINSSNKGQYNRPEPS). The PAC domain occupies 234–286 (FEYPLRINRKNDNLVRYIQLKGEIIKKDDKVFKVLGVCHDFSEIQEAKDKLEE). The PAS domain maps to 287-358 (ESKFVEALIG…QINLEKSGTP (72 aa)). Residues 378 to 469 (TSNQQQSSLS…NTTNGIGGAT (92 aa)) form a disordered region. Over residues 379–389 (SNQQQSSLSKS) the composition is skewed to low complexity. Polar residues predominate over residues 392–412 (PRSQSNCSNGNKSQNRLSKNY). Low complexity predominate over residues 413–469 (STTTTTTNNNNNNNNNNNNNNNNNNNNNSISQQQQTQVSTQQTQQQQNTTNGIGGAT). The 353-residue stretch at 556-908 (NISHELLSPM…TFHFILSIKS (353 aa)) folds into the Histidine kinase domain. The residue at position 559 (His559) is a Phosphohistidine; by autocatalysis. Disordered stretches follow at residues 711 to 821 (NSKT…KREK), 952 to 971 (TKKV…TNYG), 1080 to 1124 (NGNN…KQHS), 1157 to 1258 (PPKS…ILSP), 1277 to 1301 (SLTP…INNG), 1330 to 1393 (ASSP…NLSS), and 1419 to 1520 (SNNL…PPIL). Acidic residues-rich tracts occupy residues 725–735 (SIDGDYDDQDN) and 758–789 (ELDE…DDDT). Composition is skewed to low complexity over residues 790-807 (SSNT…FHNN), 961-971 (DNGNNDSTNYG), and 1080-1096 (NGNN…NNNI). Positions 1097-1117 (QTPNGLNNSRGSSLISTPSTK) are enriched in polar residues. Low complexity-rich tracts occupy residues 1186–1195 (SSPPINSSSS) and 1202–1258 (TNGS…ILSP). Residues 1330 to 1339 (ASSPKQSQRG) show a composition bias toward polar residues. Low complexity-rich tracts occupy residues 1340 to 1376 (YSPK…QQQQ), 1425 to 1475 (NNNN…STPE), 1482 to 1492 (SPRSNNNNNCS), and 1506 to 1520 (SSTI…PPIL). Residues 1551–1674 (KVLVAEDNTM…LLYEVINTQI (124 aa)) form the Response regulatory domain. Residue Asp1605 is modified to 4-aspartylphosphate. Positions 1695–1722 (NNNNNNTNNNNNNNNSSNPVNNNNSNSI) are enriched in low complexity. The segment at 1695–1736 (NNNNNNTNNNNNNNNSSNPVNNNNSNSIDATQQELNNEKIRI) is disordered.

In terms of processing, activation probably requires transfer of a phosphate group between a histidine in the kinase core (transmitter) domain and an aspartate of the receiver domain.

It carries out the reaction ATP + protein L-histidine = ADP + protein N-phospho-L-histidine.. Functionally, acts as a receptor histidine kinase for a signal transduction pathway. This protein undergoes an ATP-dependent autophosphorylation at a conserved histidine residue in the kinase core, and a phosphoryl group is then transferred to a conserved aspartate residue in the receiver domain. The chain is Hybrid signal transduction histidine kinase I (dhkI-1) from Dictyostelium discoideum (Social amoeba).